Here is a 161-residue protein sequence, read N- to C-terminus: Nucleotide-binding protein BTH_I0730 (161 aa).

The protein belongs to the YajQ family.

Its function is as follows. Nucleotide-binding protein. In Burkholderia thailandensis (strain ATCC 700388 / DSM 13276 / CCUG 48851 / CIP 106301 / E264), this protein is Nucleotide-binding protein BTH_I0730.